We begin with the raw amino-acid sequence, 473 residues long: Cysteine--tRNA ligase (473 aa).

Cys27 is a binding site for Zn(2+). The short motif at 29–39 (ITPYDHVHVGH) is the 'HIGH' region element. Zn(2+) contacts are provided by Cys213, His238, and Glu242. The 'KMSKS' region signature appears at 271 to 275 (KMSKS). Lys274 serves as a coordination point for ATP.

The protein belongs to the class-I aminoacyl-tRNA synthetase family. Zn(2+) serves as cofactor.

It is found in the cytoplasm. It carries out the reaction tRNA(Cys) + L-cysteine + ATP = L-cysteinyl-tRNA(Cys) + AMP + diphosphate. The protein is Cysteine--tRNA ligase of Pyrobaculum calidifontis (strain DSM 21063 / JCM 11548 / VA1).